A 265-amino-acid chain; its full sequence is Mlc titration factor A (265 aa).

The Zn(2+) site is built by His-111, His-148, His-152, and Glu-211.

This sequence belongs to the MtfA family. As to quaternary structure, interacts with Mlc. It depends on Zn(2+) as a cofactor.

It is found in the cytoplasm. Its function is as follows. Involved in the modulation of the activity of the glucose-phosphotransferase system (glucose-PTS). Interacts with the transcriptional repressor Mlc, preventing its interaction with DNA and leading to the modulation of expression of genes regulated by Mlc, including ptsG, which encodes the PTS system glucose-specific EIICB component. In terms of biological role, shows zinc-dependent metallopeptidase activity. The sequence is that of Mlc titration factor A from Escherichia coli (strain ATCC 8739 / DSM 1576 / NBRC 3972 / NCIMB 8545 / WDCM 00012 / Crooks).